The primary structure comprises 346 residues: UDP-3-O-acylglucosamine N-acyltransferase (346 aa).

The active-site Proton acceptor is the histidine 240.

This sequence belongs to the transferase hexapeptide repeat family. LpxD subfamily. In terms of assembly, homotrimer.

It carries out the reaction a UDP-3-O-[(3R)-3-hydroxyacyl]-alpha-D-glucosamine + a (3R)-hydroxyacyl-[ACP] = a UDP-2-N,3-O-bis[(3R)-3-hydroxyacyl]-alpha-D-glucosamine + holo-[ACP] + H(+). The protein operates within bacterial outer membrane biogenesis; LPS lipid A biosynthesis. Functionally, catalyzes the N-acylation of UDP-3-O-acylglucosamine using 3-hydroxyacyl-ACP as the acyl donor. Is involved in the biosynthesis of lipid A, a phosphorylated glycolipid that anchors the lipopolysaccharide to the outer membrane of the cell. The protein is UDP-3-O-acylglucosamine N-acyltransferase of Bacteroides thetaiotaomicron (strain ATCC 29148 / DSM 2079 / JCM 5827 / CCUG 10774 / NCTC 10582 / VPI-5482 / E50).